The sequence spans 339 residues: Adenylosuccinate synthetase (339 aa).

GTP-binding positions include 12 to 18 (GDEGKGS) and 42 to 44 (GHS). The active-site Proton acceptor is the aspartate 13. 2 residues coordinate Mg(2+): aspartate 13 and glycine 42. IMP is bound by residues 13 to 16 (DEGK), 40 to 43 (NAGH), threonine 127, arginine 141, glutamine 179, threonine 194, and arginine 256. Histidine 43 acts as the Proton donor in catalysis. Residue 252–258 (TVTGRRR) coordinates substrate. GTP-binding positions include arginine 258, 284 to 286 (MLD), and 324 to 326 (KTG).

This sequence belongs to the adenylosuccinate synthetase family. As to quaternary structure, homodimer. Requires Mg(2+) as cofactor.

It is found in the cytoplasm. The catalysed reaction is IMP + L-aspartate + GTP = N(6)-(1,2-dicarboxyethyl)-AMP + GDP + phosphate + 2 H(+). Its pathway is purine metabolism; AMP biosynthesis via de novo pathway; AMP from IMP: step 1/2. In terms of biological role, plays an important role in the de novo pathway of purine nucleotide biosynthesis. Catalyzes the first committed step in the biosynthesis of AMP from IMP. In Pyrococcus sp. (strain ST700), this protein is Adenylosuccinate synthetase.